The sequence spans 166 residues: Large ribosomal subunit protein uL10 (166 aa).

It belongs to the universal ribosomal protein uL10 family. In terms of assembly, part of the ribosomal stalk of the 50S ribosomal subunit. The N-terminus interacts with L11 and the large rRNA to form the base of the stalk. The C-terminus forms an elongated spine to which L12 dimers bind in a sequential fashion forming a multimeric L10(L12)X complex.

Functionally, forms part of the ribosomal stalk, playing a central role in the interaction of the ribosome with GTP-bound translation factors. The polypeptide is Large ribosomal subunit protein uL10 (Pseudomonas syringae pv. tomato (strain ATCC BAA-871 / DC3000)).